The primary structure comprises 1096 residues: DNA-directed RNA polymerase subunit beta (1096 aa).

The disordered stretch occupies residues 1069–1096 (DLMQDVNPRRSTPSRPTYESLGSDYQED).

Belongs to the RNA polymerase beta chain family. In cyanobacteria the RNAP catalytic core is composed of 2 alpha, 1 beta, 1 beta', 1 gamma and 1 omega subunit. When a sigma factor is associated with the core the holoenzyme is formed, which can initiate transcription.

The catalysed reaction is RNA(n) + a ribonucleoside 5'-triphosphate = RNA(n+1) + diphosphate. In terms of biological role, DNA-dependent RNA polymerase catalyzes the transcription of DNA into RNA using the four ribonucleoside triphosphates as substrates. The sequence is that of DNA-directed RNA polymerase subunit beta from Prochlorococcus marinus (strain SARG / CCMP1375 / SS120).